Reading from the N-terminus, the 115-residue chain is Holo-[acyl-carrier-protein] synthase (115 aa).

Residues D5 and E51 each coordinate Mg(2+).

Belongs to the P-Pant transferase superfamily. AcpS family. It depends on Mg(2+) as a cofactor.

Its subcellular location is the cytoplasm. It carries out the reaction apo-[ACP] + CoA = holo-[ACP] + adenosine 3',5'-bisphosphate + H(+). Its function is as follows. Transfers the 4'-phosphopantetheine moiety from coenzyme A to a Ser of acyl-carrier-protein. The protein is Holo-[acyl-carrier-protein] synthase of Helicobacter acinonychis (strain Sheeba).